The primary structure comprises 356 residues: MLCIIIIENMERVCEFCKAYRAVVYCIADTANLCLTCDAKVHSANSLSGRHLRTVLCDSCKNQPCVVRCFDHKMFLCHGCNDKFHGGGSSEHRRRDLRCYTGCPPAKDFAVMWGFRVMDDDDDVSLEQSFRMVKPKVQREGGFILEQILELEKVQLREENGSSSLTERGDPSPLELPKKPEEQLIDLPQTGKELVVDFSHLSSSSTLGDSFWECKSPYNKNNQLWHQNIQDIGVCEDTICSDDDFQIPDIDLTFRNFEEQFGADPEPIADSNNVFFVSSLDKSHEMKTFSSSFNNPIFAPKPASSTISFSSSETDNPYSHSEEVISFCPSLSNNTRQKVITRLKEKKRARVEEKKA.

Residues Cys14, Cys17, Cys37, His42, Cys57, Cys60, Cys80, and His85 each contribute to the Zn(2+) site. Residues 14-56 (CEFCKAYRAVVYCIADTANLCLTCDAKVHSANSLSGRHLRTVL) form a B box-type 1; atypical zinc finger. A B box-type 2; atypical zinc finger spans residues 57-97 (CDSCKNQPCVVRCFDHKMFLCHGCNDKFHGGGSSEHRRRDL). The disordered stretch occupies residues 159-178 (ENGSSSLTERGDPSPLELPK).

The protein belongs to the CONSTANS family.

The protein resides in the nucleus. In Arabidopsis thaliana (Mouse-ear cress), this protein is Putative zinc finger protein At1g68190.